A 226-amino-acid chain; its full sequence is MDEAPVTRSTLNVNSQQKSKAKNKIKNTLNSNELSSIEQRKKYQKHLKKHKNTAEDISGKGNCSPPWRLLSSVLGAMCLLLMAVAMVMTTFTTKSSSERSSSTIQQEGLHHPCPENWVWFRCSCYFFSKEELIWRDSQRACLSLNSSLIRMNKEEMNFFSLKSFFWVGVYYNETRRQWLWEDHSVLPSGLFSKLEANMKNFCASYKSKEAYMEENCANKLTYICKK.

The interval 1–28 (MDEAPVTRSTLNVNSQQKSKAKNKIKNT) is disordered. Residues 1-68 (MDEAPVTRST…GKGNCSPPWR (68 aa)) are Cytoplasmic-facing. The span at 7-18 (TRSTLNVNSQQK) shows a compositional bias: polar residues. The helical; Signal-anchor for type II membrane protein transmembrane segment at 69 to 89 (LLSSVLGAMCLLLMAVAMVMT) threads the bilayer. At 90–226 (TFTTKSSSER…ANKLTYICKK (137 aa)) the chain is on the extracellular side. Disulfide bonds link Cys-113-Cys-124, Cys-141-Cys-224, and Cys-202-Cys-216. The 106-residue stretch at 120 to 225 (FRCSCYFFSK…CANKLTYICK (106 aa)) folds into the C-type lectin domain. The N-linked (GlcNAc...) asparagine glycan is linked to Asn-145.

In terms of assembly, heterodimer; with KLRI1 or KLRI2. In terms of tissue distribution, expressed in natural killer (NK) cells (at protein level). Also detected in natural killer T (NKT) cells (at protein level). Has little or no expression in T cells (at protein level).

Its subcellular location is the cell membrane. Functionally, lectin-like receptor for natural killer (NK) cells. Can either inhibit or activate NK cell cytotoxic activity, depending on its binding partner. Heterodimer formation with KLRI1 mediates NK cell inhibition whereas heterodimer formation with KLRI2 mediates NK cell activation. Plays a role in allogeneic recognition by the immune system. This Mus musculus (Mouse) protein is Killer cell lectin-like receptor subfamily E member 1.